The primary structure comprises 498 residues: ATP synthase subunit beta, chloroplastic (498 aa).

172-179 provides a ligand contact to ATP; that stretch reads GGAGVGKT.

Belongs to the ATPase alpha/beta chains family. F-type ATPases have 2 components, CF(1) - the catalytic core - and CF(0) - the membrane proton channel. CF(1) has five subunits: alpha(3), beta(3), gamma(1), delta(1), epsilon(1). CF(0) has four main subunits: a(1), b(1), b'(1) and c(9-12).

It localises to the plastid. The protein resides in the chloroplast thylakoid membrane. It carries out the reaction ATP + H2O + 4 H(+)(in) = ADP + phosphate + 5 H(+)(out). Produces ATP from ADP in the presence of a proton gradient across the membrane. The catalytic sites are hosted primarily by the beta subunits. The protein is ATP synthase subunit beta, chloroplastic of Brasenia schreberi (Water shield).